A 113-amino-acid polypeptide reads, in one-letter code: uncharacterized protein (113 aa).

One can recognise an HTH hxlR-type domain in the interval 16–113; the sequence is TPFGYTLSLI…CEWGVKNQNN (98 aa).

This is an uncharacterized protein from Halalkalibacterium halodurans (strain ATCC BAA-125 / DSM 18197 / FERM 7344 / JCM 9153 / C-125) (Bacillus halodurans).